Reading from the N-terminus, the 2877-residue chain is MSCNGGSHPRINTLGRMTRAESGPDLRYEMTYSGGGGGGGGGGGGTSRMYYSRRCTVNDQNSDGYCQTGTMSRHQNQNTIQELLQNCADCLMRAELIAQPELKFGEGIQLAWNRELDEYFTQANDQMEIIDGLIREMRQMGQPCDAYQKRLLQLQEQMRALYKAISAPRVRRASSKGGYTCQSGSGWDEFTKRLTGECLGWMRQQRAEMDLMAWGVDSGSVEQHINSHRSIHNAIGDYRWQLDKIKADLREKSAIYQLEEEYENLLKASFERMDHLRQLQNIIQATSREIMWINDCEEEELLYDWSDKNTNIAQKQEAFSIRMSQLEVKEKELNKLKQESDQLVLNQHPASDKIEAYMDTLQTQWSWILQITKCIDVHLKENAAYFQFFEEAQSTEAYLKGLQDSIRKKYPCDKNMPLQHLLEQIKELEKEREKILEYKRQVQNLVNKSKKIVQLKPRNPDYRSNKPIILRALCDYKQDQKIVHKGDECILKDNNERSKWYVTGPGGVDMLVPSVGLIIPPPNPLAVDLSCKIEQYYEAILALWNQLYINMKSLVSWHYCMIDIEKIRAMTIAKLKTMRQEDYMKTIEDLELHYQDFIKNSQGSEMFGDDDKRRMQSQFTDAQKHYQTLVIQLPGHPQHQTVTKTEITHVGTCQDVNHNKVIETNRENDKQETWLLMELQKIRRQMEHCEARMTLKNLLLTDQGSTHNITVKINELKSVQNDSQALAEVLNQLKDMLANFRGSEKYCYLQNEIFGLFQKLENINGVTDGYLNSLCSVRALLQAILQTEDMLKVYEARLTEEETVCLDLDKVEAYRCGLKKIKNDLNLKKSLLATMKTELQKAQQIHSQSSQQYPLYDLDLGKFTEKVTQLTDRWQKIDKQIDFRLWDLEKQIKQLRNYRDNYQSFCKWLYDAKRRQDSLESMKFGDSNTVMRFLNEQKNLHNEISGKRDKSEEVHKIAELCANSIKDYELQLASYTSGLETLLNIPIKRTMVQSPSGVILQEAADIHARYIELLTRSGDYYRFLSEMLKSLEDLKLKNTKIEVLEEELRLARDANSENCNKNKFLDQNLQKYQAECSQFKAKLVSLEELKRQAELDGKSAKQNLDKCYGQIKELNEKITRLTYEIEDEKRRRKTVEDRFDQQKNDYDQLQKARQCEKESLGWQKLESEKAIKEKEYEIERLRVLLQEEGARKREYENELAKVRNHYNEEMSNLRNKYETEINITKTTIKEISMQKEDDSKNLRNQLDRLSRENRDLKDEIVRLNDSILQATEQRRRAEENALQQKACGSEIMQKKQHLEVELKQVIQQRSEDNARHKQSLEEAAKTIQDKNKEIERLKAEYQEEAKRRWEYENELSKVRNSYDEEIISLRNKFETEINITKTTIHQLTMQKEEDTSGYRAQIDNLTRENRSLSEEVKRLKNTLAQTTENLRRVEENVQQQKASGSEMSQRKQQLEIELRQVSQMRTEESMRYKQSLDDAAKTIQDKNKEIERLKQLVDKETNERKCLEDENSKLQRVQYDLQKANNSATEAMSKLKVQEQELTRLRIDYERVSQERTVKDQDITRIQSSLKDLQLQKQKAEEELSRLKRTASDESSKRKMLEEELEAMRRSLKEQAVKITNLTQQLEQASIVKKRSEDDLRQQRDVLDGHVREKQRTQEELRRLSLDVEALRRQLVQEQENVKQAHLRNEHFQKAIEDKSRSLNESKIEIERLQSLTENLTKEHLMLEEELRNLRLEYDDLRRGRSEADNDKNSTISELRSQLQISNNRTLELQGLINDLQRERENLRQEIEKFQKQALEASNRIQESKSQCTQVVQERESLLVKIKVLEQDKARLQRLEDELNRAKATLEAETRVKQRLECEKQQIQNDLNQWKTQYSRKEETIRKIESEREKSEREKNSLRSEIERLQAEIKRIEERCRRKLEDSTRETQSQLETERCRLQKEIDKLRQRPYGSHRETQTEYEWTVDSSKLVFDGLRKKVTAMQLYECQLIDKTTLDKLLKGKKSVEEVASEIQPFLRGAGAIAGASASPKEKYSLVEAKRKKFITPESTVMLLEAQAATGGIIDPHRNEKLTVDNAIARDLIDFDDRQQIYTAEKAITGFDDPFSGKTVSVSEAIKKNLIDRETGMRLLEAQLASGGVVDPVNSVFLPKDVALARGLIDRDLYRSLNDPRDSQKNFVDPITKKKVSYMQLRERCRIEPHTGLLLLSVQKRSMSFQGIRQPVTVTELVDSGILRPSTVNELESGQISYDEVGERIKDFLQGSSCIAGIYNETTKQKLGIYEAMKIGLVRPGTALELLEAQAATGFIVDPVSNLRLPVEEAYKRGLVGIEFKEKLLSAERAVTGYNDPETGNIISLFQAMNKELIEKGHGIRLLEAQIATGGIIDPKESHRLPVDMAYKRGYFNEELSEILSDPSDDTKGFFDPNTEENLTYLQLKERCIKDEETGLCLLPLKEKKKQVQTSQKNTLRKRRVVIVDPETNKEMSVQEAYKKGLIDYETFKELCEQECEWEEITITGSDGSTRVVLVDRKTGSQYDIQDAIDKGLVDRKFFDQYRSGSLSLTQFADMISLKNGVGTSSGLSGSVNDDVFSSSRHESVSKISTISSVRNLTIRSSSLSDPLEESSPIAAIFDTENLEKISITEGIERGIVDSITGQRLLEAQACTGGIIHPTTGQKLSLQDAVSQGLIDQDMATRLKPAQKAFIGFEGVKGKKKMSAAEAVKEKWLPYEAGQRFLEFQFLTGGLVDPEVHGRISTEEAIRKGFIDGRAAQRLQDISSYAKILTCPKTKLKISYKDAMNRSMVEDITGLRLLEAASVSSKGLPSPYNMSAPGSRSGSRSGSRSGSRSGSRSGSRRGSFDATGNSSYSYSYSFSSSSIGY.

Positions 1–20 (MSCNGGSHPRINTLGRMTRA) are disordered. The segment at 1-591 (MSCNGGSHPR…DYMKTIEDLE (591 aa)) is interaction with PKP1, JUP, PKP2. The segment at 1–1063 (MSCNGGSHPR…ANSENCNKNK (1063 aa)) is globular 1. 2 positions are modified to phosphoserine: serine 22 and serine 62. Tyrosine 65 carries the post-translational modification Phosphotyrosine. Position 70 is a phosphothreonine (threonine 70). Serine 174, serine 175, and serine 183 each carry phosphoserine. Spectrin repeat units follow at residues 185–278 (SGWD…HLRQ) and 279–382 (LQNI…LKEN). Residues 383–453 (AAYFQFFEEA…NLVNKSKKIV (71 aa)) form a Spectrin 3a repeat. An SH3 domain is found at 465 to 522 (NKPIILRALCDYKQDQKIVHKGDECILKDNNERSKWYVTGPGGVDMLVPSVGLIIPPP). One copy of the Spectrin 3b repeat lies at 523-552 (NPLAVDLSCKIEQYYEAILALWNQLYINMK). 3 Spectrin repeats span residues 553-634 (SLVS…IQLP), 661-776 (VIET…SLCS), and 777-890 (VRAL…DLEK). 4 coiled-coil regions span residues 1034 to 1280 (LKLK…AEEN), 1313 to 1354 (NARH…YENE), 1395 to 1443 (TSGY…QKAS), and 1473 to 1926 (KQSL…KLED). A central fibrous rod domain region spans residues 1064-1952 (FLDQNLQKYQ…QKEIDKLRQR (889 aa)). Residues serine 1665, serine 1715, and serine 2031 each carry the phosphoserine modification. Residues 1953–2877 (PYGSHRETQT…YSFSSSSIGY (925 aa)) form a globular 2 region. Positions 1967 to 2215 (TVDSSKLVFD…LLLSVQKRSM (249 aa)) are 4.5 X 38 AA tandem repeats (Domain A). Plectin repeat units lie at residues 2016–2052 (QPFL…PEST), 2053–2090 (VMLL…FDDR), 2091–2128 (QQIY…RETG), 2129–2166 (MRLL…RDLY), 2170–2204 (NDPR…PHTG), 2205–2240 (LLLL…PSTV), 2258–2295 (KDFL…PGTA), 2296–2333 (LELL…IEFK), 2334–2371 (EKLL…KGHG), 2372–2409 (IRLL…EELS), 2413–2447 (SDPS…EETG), 2463–2500 (SQKN…YETF), 2514–2551 (TITG…RKFF), 2617–2654 (SDPL…SITG), 2655–2692 (QRLL…QDMA), 2731–2768 (QRFL…GRAA), and 2769–2806 (QRLQ…DITG). Phosphoserine is present on residues serine 2214, serine 2216, and serine 2232. Residues 2251 to 2453 (DEVGERIKDF…EETGLCLLPL (203 aa)) are 4.5 X 38 AA tandem repeats (Domain B). Residues 2603–2628 (ISSVRNLTIRSSSLSDPLEESSPIAA) form an LRR 15 repeat. Residues 2616–2828 (LSDPLEESSP…GLPSPYNMSA (213 aa)) form a 4.5 X 38 AA tandem repeats (Domain C) region. Serine 2817 and serine 2822 each carry phosphoserine. Residues 2817–2877 (SKGLPSPYNM…YSFSSSSIGY (61 aa)) form a disordered region. Residue tyrosine 2824 is modified to Phosphotyrosine. Residues serine 2827 and serine 2831 each carry the phosphoserine modification. A 6 X 4 AA tandem repeats of G-S-R-[SR] region spans residues 2830-2853 (GSRSGSRSGSRSGSRSGSRSGSRR). The span at 2830–2853 (GSRSGSRSGSRSGSRSGSRSGSRR) shows a compositional bias: low complexity. An omega-N-methylarginine mark is found at arginine 2832 and arginine 2853. Phosphoserine is present on serine 2855. Threonine 2859 is subject to Phosphothreonine. Residues 2862-2877 (SSYSYSYSFSSSSIGY) are compositionally biased toward low complexity. Serine 2874 is subject to Phosphoserine.

It belongs to the plakin or cytolinker family. As to quaternary structure, homodimer. Interacts with COL17A1 (via cytoplasmic region). Interacts with DSC2. Interacts with PKP1. Interacts with PKP2. Interacts weakly with TMEM65. Phosphorylation at Ser-2855 increases association with intermediate filament cytokeratin, potentially facilitating interaction between desmosome junctions and intermediate filament architecture. As to expression, expressed in cardiomyocytes (at protein level).

The protein resides in the cell junction. It is found in the desmosome. Its subcellular location is the cell membrane. The protein localises to the cytoplasm. Functionally, major high molecular weight protein of desmosomes. Regulates profibrotic gene expression in cardiomyocytes via activation of the MAPK14/p38 MAPK signaling cascade and increase in TGFB1 protein abundance. The polypeptide is Desmoplakin (Rattus norvegicus (Rat)).